We begin with the raw amino-acid sequence, 203 residues long: Glycerol-3-phosphate acyltransferase (203 aa).

The next 4 helical transmembrane spans lie at leucine 4–isoleucine 24, isoleucine 68–isoleucine 88, glycine 104–serine 124, and phenylalanine 125–isoleucine 145.

The protein belongs to the PlsY family. As to quaternary structure, probably interacts with PlsX.

It is found in the cell inner membrane. The catalysed reaction is an acyl phosphate + sn-glycerol 3-phosphate = a 1-acyl-sn-glycero-3-phosphate + phosphate. The protein operates within lipid metabolism; phospholipid metabolism. Its function is as follows. Catalyzes the transfer of an acyl group from acyl-phosphate (acyl-PO(4)) to glycerol-3-phosphate (G3P) to form lysophosphatidic acid (LPA). This enzyme utilizes acyl-phosphate as fatty acyl donor, but not acyl-CoA or acyl-ACP. The chain is Glycerol-3-phosphate acyltransferase from Tolumonas auensis (strain DSM 9187 / NBRC 110442 / TA 4).